The sequence spans 481 residues: Xylulose kinase (481 aa).

81-82 (QH) contributes to the substrate binding site. Aspartate 239 (proton acceptor) is an active-site residue.

Belongs to the FGGY kinase family.

The catalysed reaction is D-xylulose + ATP = D-xylulose 5-phosphate + ADP + H(+). Its function is as follows. Catalyzes the phosphorylation of D-xylulose to D-xylulose 5-phosphate. This Streptomyces coelicolor (strain ATCC BAA-471 / A3(2) / M145) protein is Xylulose kinase.